The following is a 431-amino-acid chain: Ribosomal RNA small subunit methyltransferase B (431 aa).

Residues 254–260, D277, D303, and D322 contribute to the S-adenosyl-L-methionine site; that span reads CAAPGGK. C375 functions as the Nucleophile in the catalytic mechanism. Positions 398-417 are disordered; it reads LHATGTPASPGQQNLPGPEE. Over residues 403–412 the composition is skewed to polar residues; the sequence is TPASPGQQNL.

The protein belongs to the class I-like SAM-binding methyltransferase superfamily. RsmB/NOP family.

It is found in the cytoplasm. The enzyme catalyses cytidine(967) in 16S rRNA + S-adenosyl-L-methionine = 5-methylcytidine(967) in 16S rRNA + S-adenosyl-L-homocysteine + H(+). Functionally, specifically methylates the cytosine at position 967 (m5C967) of 16S rRNA. This is Ribosomal RNA small subunit methyltransferase B from Klebsiella pneumoniae (strain 342).